The chain runs to 87 residues: uncharacterized protein (87 aa).

Positions 1–26 are cleaved as a signal peptide; that stretch reads MMSTQHFILSLTILIIISNLHDEVNA. 3 disulfide bridges follow: C61–C75, C68–C79, and C74–C84.

The protein resides in the secreted. This is an uncharacterized protein from Schistosoma japonicum (Blood fluke).